Consider the following 360-residue polypeptide: Peptide chain release factor 1 (360 aa).

Gln-235 bears the N5-methylglutamine mark. Residues 283-308 (MQKRQQAEASERRNLLGSGDRSDRNR) show a composition bias toward basic and acidic residues. The tract at residues 283–313 (MQKRQQAEASERRNLLGSGDRSDRNRTYNFP) is disordered.

The protein belongs to the prokaryotic/mitochondrial release factor family. Methylated by PrmC. Methylation increases the termination efficiency of RF1.

The protein resides in the cytoplasm. In terms of biological role, peptide chain release factor 1 directs the termination of translation in response to the peptide chain termination codons UAG and UAA. The chain is Peptide chain release factor 1 from Yersinia enterocolitica serotype O:8 / biotype 1B (strain NCTC 13174 / 8081).